The primary structure comprises 251 residues: Triosephosphate isomerase (251 aa).

Position 9 to 11 (9 to 11 (NWK)) interacts with substrate. The active-site Electrophile is the histidine 95. Residue glutamate 167 is the Proton acceptor of the active site. Substrate-binding positions include glycine 173, serine 212, and 233–234 (GG).

It belongs to the triosephosphate isomerase family. Homodimer.

Its subcellular location is the cytoplasm. It catalyses the reaction D-glyceraldehyde 3-phosphate = dihydroxyacetone phosphate. The protein operates within carbohydrate biosynthesis; gluconeogenesis. Its pathway is carbohydrate degradation; glycolysis; D-glyceraldehyde 3-phosphate from glycerone phosphate: step 1/1. Its function is as follows. Involved in the gluconeogenesis. Catalyzes stereospecifically the conversion of dihydroxyacetone phosphate (DHAP) to D-glyceraldehyde-3-phosphate (G3P). The protein is Triosephosphate isomerase of Ectopseudomonas mendocina (strain ymp) (Pseudomonas mendocina).